A 344-amino-acid chain; its full sequence is L-rhamnose-proton symporter (344 aa).

The next 10 membrane-spanning stretches (helical) occupy residues 4-24, 38-58, 68-88, 101-121, 137-157, 175-195, 214-234, 259-279, 290-310, and 323-343; these read AITMGIFWHLIGAASAACFYA, WSVGGIVSWIILPWAISALLL, FSLSTLLPVFLFGAMWGIGNI, MGIGIAIGITLIVGTLMTPII, TLLGVLVALIGVGIVTRAGQL, LVLAVMCGIFSAGMSFAMNAA, LPSYVIIMGGGAIINLGFCFI, VLLSALGGLMWYLQFFFYAWG, ISWMLHMSFYVLCGGIVGLVL, and VLSLGCVVIIVAANIVGIGMA.

It belongs to the L-rhamnose transporter (TC 2.A.7.6) family.

The protein resides in the cell inner membrane. The enzyme catalyses L-rhamnopyranose(in) + H(+)(in) = L-rhamnopyranose(out) + H(+)(out). Functionally, uptake of L-rhamnose across the cytoplasmic membrane with the concomitant transport of protons into the cell (symport system). The chain is L-rhamnose-proton symporter from Escherichia coli (strain 55989 / EAEC).